The following is a 304-amino-acid chain: Oxygen-dependent coproporphyrinogen-III oxidase (304 aa).

S93 lines the substrate pocket. A divalent metal cation contacts are provided by H97 and H107. The Proton donor role is filled by H107. 109-111 (NVR) provides a ligand contact to substrate. Residues H146 and H176 each contribute to the a divalent metal cation site. Residues 241–276 (YVEFNLVYDRGTLFGLQSGGRTESILMSLPPQVRWA) are important for dimerization. 259–261 (GGR) provides a ligand contact to substrate.

This sequence belongs to the aerobic coproporphyrinogen-III oxidase family. Homodimer. A divalent metal cation serves as cofactor.

The protein resides in the cytoplasm. The enzyme catalyses coproporphyrinogen III + O2 + 2 H(+) = protoporphyrinogen IX + 2 CO2 + 2 H2O. It participates in porphyrin-containing compound metabolism; protoporphyrin-IX biosynthesis; protoporphyrinogen-IX from coproporphyrinogen-III (O2 route): step 1/1. Functionally, involved in the heme biosynthesis. Catalyzes the aerobic oxidative decarboxylation of propionate groups of rings A and B of coproporphyrinogen-III to yield the vinyl groups in protoporphyrinogen-IX. The chain is Oxygen-dependent coproporphyrinogen-III oxidase from Pseudomonas fluorescens (strain Pf0-1).